Consider the following 312-residue polypeptide: 6-hydroxy-3-succinoylpyridine 3-monooxygenase HspA (312 aa).

Residues 14–210 form the NYN domain; that stretch reads IYIDGYNFYY…RSANTDLIKF (197 aa).

The enzyme catalyses 4-(6-hydroxypyridin-3-yl)-4-oxobutanoate + 2 NADH + O2 + 2 H(+) = 2,5-dihydroxypyridine + succinate semialdehyde + 2 NAD(+) + H2O. It functions in the pathway alkaloid degradation; nicotine degradation. Involved in the nicotine degradation. Catalyzes the cleavage of 6-hydroxy-3-succinoylpyridine (HSP) by incorporation of oxygen at the 3-position to produce to 2,5-dihydroxypyridine (DHP) and succinic semialdehyde. This Pseudomonas putida (strain DSM 28022 / S16) protein is 6-hydroxy-3-succinoylpyridine 3-monooxygenase HspA.